Here is a 55-residue protein sequence, read N- to C-terminus: Photosystem II reaction center protein K (55 aa).

The propeptide occupies 1 to 18; the sequence is MFYIHLENTFDLSSTILV. A helical transmembrane segment spans residues 26–46; sequence IFDPIVDVMPIIPLFFFLLAF.

It belongs to the PsbK family. In terms of assembly, PSII is composed of 1 copy each of membrane proteins PsbA, PsbB, PsbC, PsbD, PsbE, PsbF, PsbH, PsbI, PsbJ, PsbK, PsbL, PsbM, PsbT, PsbX, PsbY, PsbZ, Psb30/Ycf12, at least 3 peripheral proteins of the oxygen-evolving complex and a large number of cofactors. It forms dimeric complexes.

The protein localises to the plastid. The protein resides in the chloroplast thylakoid membrane. One of the components of the core complex of photosystem II (PSII). PSII is a light-driven water:plastoquinone oxidoreductase that uses light energy to abstract electrons from H(2)O, generating O(2) and a proton gradient subsequently used for ATP formation. It consists of a core antenna complex that captures photons, and an electron transfer chain that converts photonic excitation into a charge separation. This is Photosystem II reaction center protein K from Anthoceros angustus (Hornwort).